The sequence spans 399 residues: 1-deoxy-D-xylulose 5-phosphate reductoisomerase (399 aa).

NADPH contacts are provided by Thr-11, Gly-12, Ser-13, Ile-14, and Asn-125. 1-deoxy-D-xylulose 5-phosphate is bound at residue Lys-126. Glu-127 contributes to the NADPH binding site. Asp-151 serves as a coordination point for Mn(2+). 1-deoxy-D-xylulose 5-phosphate-binding residues include Ser-152, Glu-153, Ser-186, and His-209. Residue Glu-153 coordinates Mn(2+). Residue Gly-215 participates in NADPH binding. 1-deoxy-D-xylulose 5-phosphate is bound by residues Ser-222, Asn-227, Lys-228, and Glu-231. Glu-231 is a Mn(2+) binding site.

Belongs to the DXR family. Requires Mg(2+) as cofactor. The cofactor is Mn(2+).

It carries out the reaction 2-C-methyl-D-erythritol 4-phosphate + NADP(+) = 1-deoxy-D-xylulose 5-phosphate + NADPH + H(+). It participates in isoprenoid biosynthesis; isopentenyl diphosphate biosynthesis via DXP pathway; isopentenyl diphosphate from 1-deoxy-D-xylulose 5-phosphate: step 1/6. Functionally, catalyzes the NADPH-dependent rearrangement and reduction of 1-deoxy-D-xylulose-5-phosphate (DXP) to 2-C-methyl-D-erythritol 4-phosphate (MEP). The sequence is that of 1-deoxy-D-xylulose 5-phosphate reductoisomerase from Acinetobacter baumannii (strain SDF).